The chain runs to 3843 residues: NBPF family member NBPF19 (3843 aa).

The stretch at 70–130 (MLRNERQFKE…RSLNEHLQAL (61 aa)) forms a coiled coil. Olduvai domains are found at residues 165–257 (ENDN…HIIP), 258–329 (ENES…VDIG), 330–421 (RHRW…PSCP), 424–479 (SREL…LDVD), 480–572 (RIKK…RSKK), 573–665 (ERRR…PSCP), 668–723 (SREL…LDVD), 724–816 (RIKK…RSKK), 817–909 (ERRR…PSCP), 912–967 (SREL…LDVD), 968–1060 (RIKK…RSKK), 1061–1153 (ERRR…PSCP), 1156–1211 (SREL…LDVD), 1212–1304 (RIKK…RSKK), 1305–1397 (ERRR…PSCP), 1400–1455 (SREL…LDVD), 1456–1548 (RIKK…RSKK), 1549–1641 (ERRR…PSCP), 1644–1699 (SREL…LDVD), 1700–1792 (RIKK…RSKK), 1793–1885 (ERRR…PSCP), 1888–1943 (SREL…LDVD), 1944–2036 (RIKK…RSKK), 2037–2129 (ERRR…PSCP), 2132–2187 (SREL…LDVD), 2188–2280 (RIKK…RSKK), 2281–2373 (ERRR…PSCP), 2376–2431 (SREL…LDVD), 2432–2524 (RIKK…RSKK), 2525–2617 (ERRR…PSCP), 2620–2675 (SREL…LDVD), 2676–2768 (RIKK…RSKK), 2769–2861 (ERRR…PSCP), 2864–2919 (SREL…LDVD), 2920–3012 (RIKK…RSKK), 3013–3105 (ERRR…PSCP), 3108–3163 (SREL…LDVD), 3164–3256 (RIKK…RSKK), 3257–3349 (ERRR…PSCP), 3352–3407 (SREL…LDVD), 3408–3500 (RIKK…RSKK), 3501–3593 (ERRR…PSCP), 3596–3651 (SREL…LDVD), 3652–3744 (RIKK…RSKK), and 3745–3843 (ERRR…IFPQ). 2 disordered regions span residues 180–203 (EKVQKSSAPREMQKAEEKEVPEDS) and 249–295 (WEDA…EGYS). Acidic residues-rich tracts occupy residues 259–268 (NESDDEEEEE) and 279–291 (ESEEEEVPQESWD). The tract at residues 559 to 597 (KGKGKKRRGRRSKKERRRGRKEGEEDQNPPCPRLSRELL) is disordered. Over residues 560 to 578 (GKGKKRRGRRSKKERRRGR) the composition is skewed to basic residues. A disordered region spans residues 803-841 (KGKGKKRRGRRSKKERRRGRKEGEEDQNPPCPRLSRELL). Residues 804-822 (GKGKKRRGRRSKKERRRGR) are compositionally biased toward basic residues. The segment at 1047 to 1085 (KGKGKKRRGRRSKKERRRGRKEGEEDQNPPCPRLSRELL) is disordered. The segment covering 1048–1066 (GKGKKRRGRRSKKERRRGR) has biased composition (basic residues). A disordered region spans residues 1291-1329 (KGKGKKRRGRRSKKERRRGRKEGEEDQNPPCPRLSRELL). Positions 1292–1310 (GKGKKRRGRRSKKERRRGR) are enriched in basic residues. Residues 1535-1573 (KGKGKKRRGRRSKKERRRGRKEGEEDQNPPCPRLSRELL) form a disordered region. Residues 1536–1554 (GKGKKRRGRRSKKERRRGR) are compositionally biased toward basic residues. Residues 1779 to 1817 (KGKGKKRRGRRSKKERRRGRKEGEEDQNPPCPRLSRELL) are disordered. The span at 1780–1798 (GKGKKRRGRRSKKERRRGR) shows a compositional bias: basic residues. Residues 2023–2061 (KGKGKKRRGRRSKKERRRGRKEGEEDQNPPCPRLSRELL) form a disordered region. Positions 2024-2042 (GKGKKRRGRRSKKERRRGR) are enriched in basic residues. The segment at 2267 to 2305 (KGKGKKRRGRRSKKERRRGRKEGEEDQNPPCPRLSRELL) is disordered. Positions 2268 to 2286 (GKGKKRRGRRSKKERRRGR) are enriched in basic residues. A disordered region spans residues 2511 to 2549 (KGKGKKRRGRRSKKERRRGRKEGEEDQNPPCPRLSRELL). Basic residues predominate over residues 2512–2530 (GKGKKRRGRRSKKERRRGR). Residues 2755–2793 (KGKGKKRRGRRSKKERRRGRKEGEEDQNPPCPRLSRELL) form a disordered region. A compositionally biased stretch (basic residues) spans 2756–2774 (GKGKKRRGRRSKKERRRGR). The disordered stretch occupies residues 2999–3037 (KGKGKKRRGRRSKKERRRGRKEGEEDQNPPCPRLSRELL). Residues 3000-3018 (GKGKKRRGRRSKKERRRGR) are compositionally biased toward basic residues. The tract at residues 3243–3281 (KGKGKKRRGRRSKKERRRGRKEGEEDQNPPCPRLSRELL) is disordered. The segment covering 3244-3262 (GKGKKRRGRRSKKERRRGR) has biased composition (basic residues). Positions 3487-3525 (KGKGKKRRGRRSKKERRRGRKEGEEDQNPPCPRLSRELL) are disordered. The span at 3488–3506 (GKGKKRRGRRSKKERRRGR) shows a compositional bias: basic residues. Residues 3731–3764 (KGKGKKRRGRRSKKERRRGRKEGEEDQNPPCPRL) form a disordered region. The segment covering 3732–3750 (GKGKKRRGRRSKKERRRGR) has biased composition (basic residues).

This sequence belongs to the NBPF family.

It is found in the cytoplasm. The protein is NBPF family member NBPF19 of Homo sapiens (Human).